Here is a 59-residue protein sequence, read N- to C-terminus: Large ribosomal subunit protein uL30 (59 aa).

Belongs to the universal ribosomal protein uL30 family. Part of the 50S ribosomal subunit.

This Geotalea daltonii (strain DSM 22248 / JCM 15807 / FRC-32) (Geobacter daltonii) protein is Large ribosomal subunit protein uL30.